Consider the following 233-residue polypeptide: uncharacterized protein (233 aa).

The region spanning 16–84 is the HTH gntR-type domain; it reads KTLAKQVIER…TRGGTYFNDK (69 aa). The segment at residues 44–63 is a DNA-binding region (H-T-H motif); that stretch reads EMELMDILHVSRPVLREALS.

This is an uncharacterized protein from Bacillus subtilis (strain 168).